Consider the following 238-residue polypeptide: RNA pyrophosphohydrolase (238 aa).

Positions 6-149 (GFRPNVGIIL…KREVYQMALS (144 aa)) constitute a Nudix hydrolase domain. Positions 38–59 (GGIKYGETPEQAMYRELHEEVG) match the Nudix box motif. Residues 161-238 (APLSPYGRGG…PDDTPSKDSL (78 aa)) are disordered. Residues 171–181 (PHRERDGRDNR) show a composition bias toward basic and acidic residues. Positions 188–199 (RNDQNTRGQRQP) are enriched in polar residues. Positions 204-217 (VTTSTVIVETVITS) are enriched in low complexity.

Belongs to the Nudix hydrolase family. RppH subfamily. A divalent metal cation serves as cofactor.

Accelerates the degradation of transcripts by removing pyrophosphate from the 5'-end of triphosphorylated RNA, leading to a more labile monophosphorylated state that can stimulate subsequent ribonuclease cleavage. This chain is RNA pyrophosphohydrolase, found in Ralstonia nicotianae (strain ATCC BAA-1114 / GMI1000) (Ralstonia solanacearum).